We begin with the raw amino-acid sequence, 413 residues long: 3-isopropylmalate dehydratase large subunit (413 aa).

Positions 293, 353, and 356 each coordinate [4Fe-4S] cluster.

It belongs to the aconitase/IPM isomerase family. LeuC type 2 subfamily. In terms of assembly, heterodimer of LeuC and LeuD. It depends on [4Fe-4S] cluster as a cofactor.

It catalyses the reaction (2R,3S)-3-isopropylmalate = (2S)-2-isopropylmalate. The protein operates within amino-acid biosynthesis; L-leucine biosynthesis; L-leucine from 3-methyl-2-oxobutanoate: step 2/4. Its function is as follows. Catalyzes the isomerization between 2-isopropylmalate and 3-isopropylmalate, via the formation of 2-isopropylmaleate. The sequence is that of 3-isopropylmalate dehydratase large subunit from Picrophilus torridus (strain ATCC 700027 / DSM 9790 / JCM 10055 / NBRC 100828 / KAW 2/3).